A 158-amino-acid polypeptide reads, in one-letter code: Transmembrane protein 50B (158 aa).

Ala2 is modified (N-acetylalanine). Helical transmembrane passes span 28–48 (VVAG…AVVY), 56–76 (HAFH…NAVS), 98–118 (WLFI…WILF), and 128–148 (VYPG…TLIY).

The protein belongs to the UPF0220 family. As to quaternary structure, may form homotrimers or homodimers.

It is found in the endoplasmic reticulum membrane. The protein localises to the golgi apparatus membrane. The sequence is that of Transmembrane protein 50B (TMEM50B) from Bos taurus (Bovine).